Reading from the N-terminus, the 430-residue chain is Inner membrane transport protein YbaT (430 aa).

The Cytoplasmic portion of the chain corresponds to 1–14 (MMNTEGNNGNKPLG). The chain crosses the membrane as a helical span at residues 15–35 (LWNVVSIGIGAMVGAGIFALL). At 36 to 38 (GQA) the chain is on the periplasmic side. A helical transmembrane segment spans residues 39–59 (ALLMEASTWVAFAFGGIVAMF). The Cytoplasmic segment spans residues 60 to 88 (SGYAYARLGASYPSNGGIIDFFRRGLGNG). A helical membrane pass occupies residues 89-109 (VFSLALSLLYLLTLAVSIAMV). The Periplasmic segment spans residues 110 to 128 (ARAFGAYAVQFLHEGSQEE). A helical transmembrane segment spans residues 129–149 (HLILLYALGIIAVMTLFNSLS). Residues 150-157 (NHAVGRLE) lie on the Cytoplasmic side of the membrane. The helical transmembrane segment at 158–178 (VILVGIKMMILLLLIIAGVWS) threads the bilayer. Residues 179 to 192 (LQPAHISVSAPPSS) are Periplasmic-facing. Residues 193–213 (GAFFSCIGITFLAYAGFGMMA) traverse the membrane as a helical segment. Residues 214–228 (NAADKVKDPQVIMPR) lie on the Cytoplasmic side of the membrane. The helical transmembrane segment at 229–249 (AFLVAIGVTTLLYISLALVLL) threads the bilayer. Topologically, residues 250-272 (SDVSALELEKYADTAVAQAASPL) are periplasmic. A helical transmembrane segment spans residues 273 to 293 (LGHVGYVIVVIGALLATASAI). The Cytoplasmic portion of the chain corresponds to 294-325 (NANLFAVFNIMDNMGSERELPKLMNKSLWRQS). Residues 326–346 (TWGNIIVVVLIMLMTAALNLG) form a helical membrane-spanning segment. Position 347 (serine 347) is a topological domain, periplasmic. A helical membrane pass occupies residues 348-368 (LASVASATFLICYLAVFVVAI). Topologically, residues 369–379 (RLRHDIHASLP) are cytoplasmic. The chain crosses the membrane as a helical span at residues 380-400 (ILIVGTLVMLLVIVGFIYSLW). The Periplasmic portion of the chain corresponds to 401–403 (SQG). A helical membrane pass occupies residues 404–424 (SRALIWIIGSLLLSLIVAMVM). At 425–430 (KRNKTV) the chain is on the cytoplasmic side.

The protein belongs to the amino acid-polyamine-organocation (APC) superfamily.

It localises to the cell inner membrane. Functionally, probable amino-acid or metabolite transport protein. The polypeptide is Inner membrane transport protein YbaT (ybaT) (Escherichia coli (strain K12)).